The following is a 44-amino-acid chain: Protein PsbN (44 aa).

A helical membrane pass occupies residues 6 to 26 (FFFTIFLWCLLLSITGYSIYV).

The protein belongs to the PsbN family.

Its subcellular location is the plastid. The protein localises to the chloroplast thylakoid membrane. Functionally, may play a role in photosystem I and II biogenesis. In Chlorella vulgaris (Green alga), this protein is Protein PsbN.